The primary structure comprises 210 residues: Orotate phosphoribosyltransferase (210 aa).

5-phospho-alpha-D-ribose 1-diphosphate-binding positions include R96, K100, H102, and 122 to 130 (EDLISTGGS). S126 is a binding site for orotate.

The protein belongs to the purine/pyrimidine phosphoribosyltransferase family. PyrE subfamily. Homodimer. The cofactor is Mg(2+).

It carries out the reaction orotidine 5'-phosphate + diphosphate = orotate + 5-phospho-alpha-D-ribose 1-diphosphate. It participates in pyrimidine metabolism; UMP biosynthesis via de novo pathway; UMP from orotate: step 1/2. Its function is as follows. Catalyzes the transfer of a ribosyl phosphate group from 5-phosphoribose 1-diphosphate to orotate, leading to the formation of orotidine monophosphate (OMP). The sequence is that of Orotate phosphoribosyltransferase (pyrE) from Streptococcus pneumoniae serotype 19F (strain G54).